The sequence spans 173 residues: Translation initiation factor IF-3 (173 aa).

This sequence belongs to the IF-3 family. As to quaternary structure, monomer.

It is found in the cytoplasm. Functionally, IF-3 binds to the 30S ribosomal subunit and shifts the equilibrium between 70S ribosomes and their 50S and 30S subunits in favor of the free subunits, thus enhancing the availability of 30S subunits on which protein synthesis initiation begins. This is Translation initiation factor IF-3 from Phenylobacterium zucineum (strain HLK1).